The chain runs to 465 residues: Putative F-box/FBD/LRR-repeat protein At1g22000 (465 aa).

Positions Glu28–Lys74 constitute an F-box domain. 5 LRR repeats span residues Cys154 to Tyr181, Val182 to Ser207, Asp210 to Glu230, Asn248 to Glu273, and Ile339 to Asn365. The FBD domain maps to Ser373–Leu424.

This chain is Putative F-box/FBD/LRR-repeat protein At1g22000, found in Arabidopsis thaliana (Mouse-ear cress).